The sequence spans 41 residues: Diuretic hormone 1 (41 aa).

An Isoleucine amide modification is found at I41.

It is found in the secreted. Regulation of fluid secretion. May stimulate primary urine secretion by Malpighian tubules and causes a dose-dependent stimulation of cAMP levels in the tubules. The protein is Diuretic hormone 1 of Hyles lineata (White-lined sphinx moth).